The chain runs to 153 residues: MANSNLPRRIIKETQRLLSEPAPGISASPSEENMRYFNVMILGPTQSPYEGGVFKLELFLPEEYPMAAPKVRFLTKIYHPNIDKLGRICLDILKDKWSPALQIRTVLLSIQALLSAPNPDDPLSENIAKHWKSNEAEAVETAKEWTRLYASGA.

Residues 5–151 (NLPRRIIKET…AKEWTRLYAS (147 aa)) form the UBC core domain. The Glycyl thioester intermediate role is filled by Cys-89.

The protein belongs to the ubiquitin-conjugating enzyme family. As to quaternary structure, interacts with yeast and human Mms2, with the RING domain of RGLG2 and with UEV1A, UEV1B, UEV1C and UEV1D. In terms of tissue distribution, ubiquitously expressed at low level.

It catalyses the reaction S-ubiquitinyl-[E1 ubiquitin-activating enzyme]-L-cysteine + [E2 ubiquitin-conjugating enzyme]-L-cysteine = [E1 ubiquitin-activating enzyme]-L-cysteine + S-ubiquitinyl-[E2 ubiquitin-conjugating enzyme]-L-cysteine.. It participates in protein modification; protein ubiquitination. In terms of biological role, catalyzes the synthesis of non-canonical poly-ubiquitin chains that are linked through 'Lys-63'. This type of poly-ubiquitination does not lead to protein degradation by the proteasome. Mediates transcriptional activation of target genes. Required for postreplication repair of UV-damaged DNA and for adapting root developmental programs to suboptimal availability of iron. This chain is Ubiquitin-conjugating enzyme E2 36 (UBC36), found in Arabidopsis thaliana (Mouse-ear cress).